The chain runs to 351 residues: D-alanine--D-alanine ligase (351 aa).

The region spanning Lys-146–Leu-340 is the ATP-grasp domain. Ala-173–Ser-226 contributes to the ATP binding site. Mg(2+)-binding residues include Asp-295, Glu-307, and Asn-309.

It belongs to the D-alanine--D-alanine ligase family. It depends on Mg(2+) as a cofactor. Requires Mn(2+) as cofactor.

Its subcellular location is the cytoplasm. The catalysed reaction is 2 D-alanine + ATP = D-alanyl-D-alanine + ADP + phosphate + H(+). It functions in the pathway cell wall biogenesis; peptidoglycan biosynthesis. Its function is as follows. Cell wall formation. This Pediococcus pentosaceus (strain ATCC 25745 / CCUG 21536 / LMG 10740 / 183-1w) protein is D-alanine--D-alanine ligase.